Reading from the N-terminus, the 92-residue chain is Serine rich endogenous peptide 11 (92 aa).

An N-terminal signal peptide occupies residues 1–29 (MENNTFSSKSINLLILLLLLCTFLCQTES). The segment at 50 to 92 (PNTDIGTPSSTSDRGGGGNGRRLMSQMDVGASSSGQGGGRNRH) is disordered. Over residues 53–62 (DIGTPSSTSD) the composition is skewed to polar residues. Short sequence motifs (SCOOP motif) lie at residues 53 to 67 (DIGT…GGGG) and 75 to 89 (QMDV…GGGR). 2 short sequence motifs (sxS motif essential for MIK2 binding) span residues 59–61 (STS) and 81–83 (SSS).

Belongs to the serine rich endogenous peptide (SCOOP) phytocytokine family. As to quaternary structure, interacts with MIK2 (via extracellular leucine-rich repeat domain); this interaction triggers the formation of complex between MIK2 and the BAK1/SERK3 and SERK4 coreceptors, and subsequent BAK1 activation by phosphorylation. In terms of tissue distribution, mostly expressed in seedlings shoots and roots, and, to a lower extent, in leaves.

It localises to the cell membrane. It is found in the secreted. The protein resides in the extracellular space. The protein localises to the apoplast. In terms of biological role, brassicaceae-specific phytocytokine (plant endogenous peptide released into the apoplast) perceived by MIK2 in a BAK1/SERK3 and SERK4 coreceptors-dependent manner, that modulates various physiological and antimicrobial processes including growth prevention and reactive oxygen species (ROS) response regulation. The polypeptide is Serine rich endogenous peptide 11 (Arabidopsis thaliana (Mouse-ear cress)).